The following is a 257-amino-acid chain: Dihydroorotate dehydrogenase B (NAD(+)), electron transfer subunit (257 aa).

Residues 2-102 enclose the FAD-binding FR-type domain; the sequence is IGRERMTVVS…LGPLGHGFPL (101 aa). FAD-binding positions include 53 to 56, 70 to 72, and 77 to 78; these read RPLS, IYR, and GT. [2Fe-2S] cluster-binding residues include C221, C226, C229, and C244.

It belongs to the PyrK family. As to quaternary structure, heterotetramer of 2 PyrK and 2 PyrD type B subunits. [2Fe-2S] cluster serves as cofactor. The cofactor is FAD.

Its pathway is pyrimidine metabolism; UMP biosynthesis via de novo pathway; orotate from (S)-dihydroorotate (NAD(+) route): step 1/1. Functionally, responsible for channeling the electrons from the oxidation of dihydroorotate from the FMN redox center in the PyrD type B subunit to the ultimate electron acceptor NAD(+). The sequence is that of Dihydroorotate dehydrogenase B (NAD(+)), electron transfer subunit from Geobacillus thermodenitrificans (strain NG80-2).